A 299-amino-acid chain; its full sequence is Hydrogenase maturation factor HypB (299 aa).

Residues cysteine 2, cysteine 5, and cysteine 7 each coordinate Ni(2+). The interval 18–57 (EVGDDGHGHHHHDGHHDHDHDHDHHRGDHEHDDHHHAEDG) is disordered. Positions 31–57 (GHHDHDHDHDHHRGDHEHDDHHHAEDG) are enriched in basic and acidic residues. Positions 107–268 (ALNFVSSPGS…LRVNPRLQTL (162 aa)) are G-domain. Residues cysteine 167, histidine 168, and cysteine 199 each contribute to the Ni(2+) site. Zn(2+) contacts are provided by cysteine 167, histidine 168, and cysteine 199.

The protein belongs to the SIMIBI class G3E GTPase family. HypB/HupM subfamily.

Involved in the maturation of [NiFe] hydrogenases. Required for nickel insertion into the metal center of the hydrogenase. Exhibits a low intrinsic GTPase activity, which is essential for nickel insertion. Is able to bind 4 nickel ions per subunit. Can also bind zinc. The chain is Hydrogenase maturation factor HypB from Rhizobium leguminosarum bv. viciae.